A 356-amino-acid chain; its full sequence is Peptide chain release factor 1 (356 aa).

Position 233 is an N5-methylglutamine (Gln-233).

It belongs to the prokaryotic/mitochondrial release factor family. Methylated by PrmC. Methylation increases the termination efficiency of RF1.

It localises to the cytoplasm. In terms of biological role, peptide chain release factor 1 directs the termination of translation in response to the peptide chain termination codons UAG and UAA. In Bacillus subtilis (strain 168), this protein is Peptide chain release factor 1 (prfA).